The sequence spans 276 residues: 3-methyl-2-oxobutanoate hydroxymethyltransferase (276 aa).

Mg(2+) contacts are provided by aspartate 49 and aspartate 88. 3-methyl-2-oxobutanoate is bound by residues aspartate 49–serine 50, aspartate 88, and lysine 118. Residue glutamate 120 participates in Mg(2+) binding. The Proton acceptor role is filled by glutamate 187.

This sequence belongs to the PanB family. Homodecamer; pentamer of dimers. Mg(2+) is required as a cofactor.

Its subcellular location is the cytoplasm. It catalyses the reaction 3-methyl-2-oxobutanoate + (6R)-5,10-methylene-5,6,7,8-tetrahydrofolate + H2O = 2-dehydropantoate + (6S)-5,6,7,8-tetrahydrofolate. It functions in the pathway cofactor biosynthesis; (R)-pantothenate biosynthesis; (R)-pantoate from 3-methyl-2-oxobutanoate: step 1/2. In terms of biological role, catalyzes the reversible reaction in which hydroxymethyl group from 5,10-methylenetetrahydrofolate is transferred onto alpha-ketoisovalerate to form ketopantoate. The polypeptide is 3-methyl-2-oxobutanoate hydroxymethyltransferase (Afipia carboxidovorans (strain ATCC 49405 / DSM 1227 / KCTC 32145 / OM5) (Oligotropha carboxidovorans)).